The chain runs to 310 residues: Glycine-rich RNA-binding protein RZ1C (310 aa).

Residues 7-85 form the RRM domain; that stretch reads SRIFVGGLSP…RVISVNRAEP (79 aa). A Phosphoserine modification is found at Ser-15. Residues 82–120 form a disordered region; that stretch reads RAEPKLGRDDGESHGSRGGRDSGYSIAGKGSFGGGGGGG. Residues 83-101 show a composition bias toward basic and acidic residues; sequence AEPKLGRDDGESHGSRGGR. Residues 111 to 120 are compositionally biased toward gly residues; that stretch reads GSFGGGGGGG. A CCHC-type zinc finger spans residues 128 to 143; it reads CFKCGRVGHWARDCPS. Residues 224–310 are disordered; that stretch reads RFAGGDRYSR…YPSSSTFDRY (87 aa). 2 stretches are compositionally biased toward basic and acidic residues: residues 226–236 and 244–253; these read AGGDRYSRGSD and DKARSFERDI. Gly residues predominate over residues 261–273; the sequence is RYGGGRAGGPIRG. Position 295 is a phosphoserine (Ser-295).

In terms of tissue distribution, expressed in roots, rosette and cauline leaves, stems, floral buds and flowers.

The protein resides in the nucleus. In terms of biological role, binds RNA and DNA sequences non-specifically. May be involved in tolerance to cold stress. The chain is Glycine-rich RNA-binding protein RZ1C from Arabidopsis thaliana (Mouse-ear cress).